Here is a 303-residue protein sequence, read N- to C-terminus: Quinolinate synthase (303 aa).

Iminosuccinate is bound by residues histidine 24 and serine 41. Position 86 (cysteine 86) interacts with [4Fe-4S] cluster. Residues 112–114 (YIN) and serine 129 each bind iminosuccinate. Residue cysteine 172 participates in [4Fe-4S] cluster binding. Residues 198 to 200 (HPE) and threonine 215 contribute to the iminosuccinate site. Position 260 (cysteine 260) interacts with [4Fe-4S] cluster.

The protein belongs to the quinolinate synthase family. Type 2 subfamily. [4Fe-4S] cluster serves as cofactor.

The protein resides in the cytoplasm. It carries out the reaction iminosuccinate + dihydroxyacetone phosphate = quinolinate + phosphate + 2 H2O + H(+). It functions in the pathway cofactor biosynthesis; NAD(+) biosynthesis; quinolinate from iminoaspartate: step 1/1. Functionally, catalyzes the condensation of iminoaspartate with dihydroxyacetone phosphate to form quinolinate. This chain is Quinolinate synthase, found in Caldicellulosiruptor saccharolyticus (strain ATCC 43494 / DSM 8903 / Tp8T 6331).